The sequence spans 372 residues: UDP-N-acetylglucosamine--N-acetylmuramyl-(pentapeptide) pyrophosphoryl-undecaprenol N-acetylglucosamine transferase (372 aa).

Residues 16–18 (TGG), N128, R164, S192, I250, and Q295 contribute to the UDP-N-acetyl-alpha-D-glucosamine site.

It belongs to the glycosyltransferase 28 family. MurG subfamily.

The protein localises to the cell inner membrane. The enzyme catalyses di-trans,octa-cis-undecaprenyl diphospho-N-acetyl-alpha-D-muramoyl-L-alanyl-D-glutamyl-meso-2,6-diaminopimeloyl-D-alanyl-D-alanine + UDP-N-acetyl-alpha-D-glucosamine = di-trans,octa-cis-undecaprenyl diphospho-[N-acetyl-alpha-D-glucosaminyl-(1-&gt;4)]-N-acetyl-alpha-D-muramoyl-L-alanyl-D-glutamyl-meso-2,6-diaminopimeloyl-D-alanyl-D-alanine + UDP + H(+). Its pathway is cell wall biogenesis; peptidoglycan biosynthesis. Cell wall formation. Catalyzes the transfer of a GlcNAc subunit on undecaprenyl-pyrophosphoryl-MurNAc-pentapeptide (lipid intermediate I) to form undecaprenyl-pyrophosphoryl-MurNAc-(pentapeptide)GlcNAc (lipid intermediate II). The sequence is that of UDP-N-acetylglucosamine--N-acetylmuramyl-(pentapeptide) pyrophosphoryl-undecaprenol N-acetylglucosamine transferase from Paraburkholderia xenovorans (strain LB400).